The following is a 276-amino-acid chain: ARL14 effector protein (276 aa).

The segment at 158-177 is disordered; sequence KQTEFAPEGGKREKRKLTKA. Lys-176 participates in a covalent cross-link: Glycyl lysine isopeptide (Lys-Gly) (interchain with G-Cter in SUMO2). A phosphoserine mark is found at Ser-182 and Ser-266.

As to quaternary structure, interacts with ARL14 and MYO1E.

It is found in the cytoplasm. Through its interaction with ARL14 and MYO1E, may connect MHC class II-containing cytoplasmic vesicles to the actin network and hence controls the movement of these vesicles along the actin cytoskeleton in dendritic cells. The polypeptide is ARL14 effector protein (Arl14ep) (Mus musculus (Mouse)).